The primary structure comprises 875 residues: Leucine--tRNA ligase (875 aa).

Positions P43 to H53 match the 'HIGH' region motif. Residues K631 to S635 carry the 'KMSKS' region motif. Residue K634 coordinates ATP.

The protein belongs to the class-I aminoacyl-tRNA synthetase family.

It is found in the cytoplasm. The catalysed reaction is tRNA(Leu) + L-leucine + ATP = L-leucyl-tRNA(Leu) + AMP + diphosphate. This Mesorhizobium japonicum (strain LMG 29417 / CECT 9101 / MAFF 303099) (Mesorhizobium loti (strain MAFF 303099)) protein is Leucine--tRNA ligase.